We begin with the raw amino-acid sequence, 489 residues long: 3-octaprenyl-4-hydroxybenzoate carboxy-lyase (489 aa).

Asparagine 172 serves as a coordination point for Mn(2+). Residues 175-177, 189-191, and 194-195 each bind prenylated FMN; these read IYR, RWL, and RG. Mn(2+) is bound at residue glutamate 238. The active-site Proton donor is aspartate 287.

Belongs to the UbiD family. In terms of assembly, homohexamer. Prenylated FMN is required as a cofactor. It depends on Mn(2+) as a cofactor.

Its subcellular location is the cell membrane. The catalysed reaction is a 4-hydroxy-3-(all-trans-polyprenyl)benzoate + H(+) = a 2-(all-trans-polyprenyl)phenol + CO2. It participates in cofactor biosynthesis; ubiquinone biosynthesis. Functionally, catalyzes the decarboxylation of 3-octaprenyl-4-hydroxy benzoate to 2-octaprenylphenol, an intermediate step in ubiquinone biosynthesis. The polypeptide is 3-octaprenyl-4-hydroxybenzoate carboxy-lyase (Aeromonas hydrophila subsp. hydrophila (strain ATCC 7966 / DSM 30187 / BCRC 13018 / CCUG 14551 / JCM 1027 / KCTC 2358 / NCIMB 9240 / NCTC 8049)).